We begin with the raw amino-acid sequence, 172 residues long: Trypsin inhibitor DE-3 (172 aa).

Disulfide bonds link cysteine 39/cysteine 83 and cysteine 132/cysteine 139.

This sequence belongs to the protease inhibitor I3 (leguminous Kunitz-type inhibitor) family.

Functionally, inhibition of trypsin. The protein is Trypsin inhibitor DE-3 of Erythrina latissima (Broad-leaved coral tree).